We begin with the raw amino-acid sequence, 379 residues long: Glucose-1-phosphate adenylyltransferase (379 aa).

Alpha-D-glucose 1-phosphate contacts are provided by residues G164, 179–180 (EK), and S190.

It belongs to the bacterial/plant glucose-1-phosphate adenylyltransferase family. In terms of assembly, homotetramer.

The enzyme catalyses alpha-D-glucose 1-phosphate + ATP + H(+) = ADP-alpha-D-glucose + diphosphate. Its pathway is glycan biosynthesis; glycogen biosynthesis. Involved in the biosynthesis of ADP-glucose, a building block required for the elongation reactions to produce glycogen. Catalyzes the reaction between ATP and alpha-D-glucose 1-phosphate (G1P) to produce pyrophosphate and ADP-Glc. The protein is Glucose-1-phosphate adenylyltransferase of Lactiplantibacillus plantarum (strain ATCC BAA-793 / NCIMB 8826 / WCFS1) (Lactobacillus plantarum).